Reading from the N-terminus, the 389-residue chain is Rhizopuspepsin-1 (389 aa).

Positions 1 to 21 (MKFTLISSCVALAAMTLAVEA) are cleaved as a signal peptide. Residues 22 to 66 (APNGKKINIPLAKNNSYKPSAKNALNKALAKYNRRKVGSGGITTE) constitute a propeptide, activation peptide. Positions 82-385 (YYGEVTVGTP…NQEVPEVQIA (304 aa)) constitute a Peptidase A1 domain. Residue Asp100 is part of the active site. A disulfide bond links Cys113 and Cys116. Residue Asp283 is part of the active site. An intrachain disulfide couples Cys317 to Cys350.

This sequence belongs to the peptidase A1 family.

The catalysed reaction is Hydrolysis of proteins with broad specificity similar to that of pepsin A, preferring hydrophobic residues at P1 and P1'. Clots milk and activates trypsinogen. Does not cleave 4-Gln-|-His-5, but does cleave 10-His-|-Leu-11 and 12-Val-|-Glu-13 in B chain of insulin.. The protein is Rhizopuspepsin-1 (RNAP) of Rhizopus niveus.